Here is a 219-residue protein sequence, read N- to C-terminus: Protein-L-isoaspartate O-methyltransferase (219 aa).

Residue Ser-67 is part of the active site.

It belongs to the methyltransferase superfamily. L-isoaspartyl/D-aspartyl protein methyltransferase family.

It localises to the cytoplasm. It carries out the reaction [protein]-L-isoaspartate + S-adenosyl-L-methionine = [protein]-L-isoaspartate alpha-methyl ester + S-adenosyl-L-homocysteine. Catalyzes the methyl esterification of L-isoaspartyl residues in peptides and proteins that result from spontaneous decomposition of normal L-aspartyl and L-asparaginyl residues. It plays a role in the repair and/or degradation of damaged proteins. The polypeptide is Protein-L-isoaspartate O-methyltransferase (Cereibacter sphaeroides (strain ATCC 17029 / ATH 2.4.9) (Rhodobacter sphaeroides)).